Reading from the N-terminus, the 471-residue chain is Phosphatidylinositol 4-kinase type 2-alpha (471 aa).

2 disordered regions span residues 1–25 (MDET…QCSP) and 48–101 (PGSA…PDDP). Residues 90–101 (AERERNKFPDDP) are compositionally biased toward basic and acidic residues. Residues 117–445 (DILPERISQG…VQTPPVIVET (329 aa)) form the PI3K/PI4K catalytic domain. The tract at residues 123–129 (ISQGSSG) is G-loop. Residues 124-130 (SQGSSGS) and K145 contribute to the ATP site. The segment at 150 to 152 (EPY) is important for substrate binding. Residues 158-171 (KWTKWLQKLCCPCC) form an important for interaction with membranes region. S-palmitoyl cysteine attachment occurs at residues C167, C168, C170, and C171. 254–257 (QLFV) contributes to the ATP binding site. Positions 261–269 (KDADYWLRR) are important for interaction with membranes. The catalytic loop stretch occupies residues 298–306 (RNTDRGNDN). Residues 336–356 (AIDNGLAFPLKHPDSWRAYPF) are activation loop. D338 contributes to the ATP binding site. The interval 351 to 360 (WRAYPFYWAW) is important for interaction with membranes.

Belongs to the PI3/PI4-kinase family. Type II PI4K subfamily.

Its subcellular location is the golgi apparatus. The protein resides in the trans-Golgi network membrane. The protein localises to the membrane raft. It is found in the endosome. It localises to the endosome membrane. Its subcellular location is the cytoplasmic vesicle. The protein resides in the cell projection. The protein localises to the dendrite. It is found in the presynaptic cell membrane. It localises to the synapse. Its subcellular location is the synaptosome. The protein resides in the mitochondrion. The protein localises to the membrane. It is found in the cell membrane. It localises to the perikaryon. Its subcellular location is the neuron projection. The enzyme catalyses a 1,2-diacyl-sn-glycero-3-phospho-(1D-myo-inositol) + ATP = a 1,2-diacyl-sn-glycero-3-phospho-(1D-myo-inositol 4-phosphate) + ADP + H(+). In terms of biological role, membrane-bound phosphatidylinositol-4 kinase (PI4-kinase) that catalyzes the phosphorylation of phosphatidylinositol (PI) to phosphatidylinositol 4-phosphate (PI4P), a lipid that plays important roles in endocytosis, Golgi function, protein sorting and membrane trafficking. Besides, phosphorylation of phosphatidylinositol (PI) to phosphatidylinositol 4-phosphate (PI4P) is the first committed step in the generation of phosphatidylinositol 4,5-bisphosphate (PIP2), a precursor of the second messenger inositol 1,4,5-trisphosphate (InsP3). This chain is Phosphatidylinositol 4-kinase type 2-alpha (pi4k2a), found in Xenopus tropicalis (Western clawed frog).